The following is a 274-amino-acid chain: MSAGRRSSGGRSAAAPRFTPPRGRAPLAVALDAPDAATALRWAAAVAPTVAVLKIGLELFYREGPAIVTALRAAGVLAGAGGAAVAAGGTGSAPELFLDLKLHDIPATVAGGMRSITPLGPRFVTVHAAGGAAMIRAAIEAAPDVEVAVVTVLTSLDVAALSAIGLAGPPSDAVRRLAVLAVEAGARTLVCSPREVRMVRMELGSNVTLITPGVRPAGSETGDQARTATPEAALVGGSDLVVVGRPITGAPDPGVAARAIAAGLSAAGRAADLL.

Residues 1–15 (MSAGRRSSGGRSAAA) show a composition bias toward low complexity. Positions 1-21 (MSAGRRSSGGRSAAAPRFTPP) are disordered. Substrate contacts are provided by residues aspartate 32, lysine 54, 99–108 (DLKLHDIPAT), threonine 154, arginine 215, glutamine 224, glycine 244, and arginine 245. The active-site Proton donor is lysine 101.

It belongs to the OMP decarboxylase family. Type 1 subfamily. Homodimer.

It catalyses the reaction orotidine 5'-phosphate + H(+) = UMP + CO2. It participates in pyrimidine metabolism; UMP biosynthesis via de novo pathway; UMP from orotate: step 2/2. Catalyzes the decarboxylation of orotidine 5'-monophosphate (OMP) to uridine 5'-monophosphate (UMP). The sequence is that of Orotidine 5'-phosphate decarboxylase from Frankia casuarinae (strain DSM 45818 / CECT 9043 / HFP020203 / CcI3).